The sequence spans 248 residues: DNA-directed RNA polymerase subunit Rpo3 (248 aa).

The protein belongs to the archaeal Rpo3/eukaryotic RPB3 RNA polymerase subunit family. Part of the RNA polymerase complex.

It is found in the cytoplasm. The enzyme catalyses RNA(n) + a ribonucleoside 5'-triphosphate = RNA(n+1) + diphosphate. DNA-dependent RNA polymerase (RNAP) catalyzes the transcription of DNA into RNA using the four ribonucleoside triphosphates as substrates. The sequence is that of DNA-directed RNA polymerase subunit Rpo3 from Halobacterium salinarum (strain ATCC 29341 / DSM 671 / R1).